The following is a 92-amino-acid chain: Small ribosomal subunit protein uS19c (92 aa).

Belongs to the universal ribosomal protein uS19 family.

The protein resides in the plastid. Its subcellular location is the chloroplast. In terms of biological role, protein S19 forms a complex with S13 that binds strongly to the 16S ribosomal RNA. This is Small ribosomal subunit protein uS19c from Phalaenopsis aphrodite subsp. formosana (Moth orchid).